The chain runs to 189 residues: Large ribosomal subunit protein uL6 (189 aa).

This sequence belongs to the universal ribosomal protein uL6 family. As to quaternary structure, part of the 50S ribosomal subunit.

In terms of biological role, this protein binds to the 23S rRNA, and is important in its secondary structure. It is located near the subunit interface in the base of the L7/L12 stalk, and near the tRNA binding site of the peptidyltransferase center. The sequence is that of Large ribosomal subunit protein uL6 from Bacteroides fragilis (strain ATCC 25285 / DSM 2151 / CCUG 4856 / JCM 11019 / LMG 10263 / NCTC 9343 / Onslow / VPI 2553 / EN-2).